The primary structure comprises 151 residues: Putative pre-16S rRNA nuclease (151 aa).

The protein belongs to the YqgF nuclease family.

The protein resides in the cytoplasm. Functionally, could be a nuclease involved in processing of the 5'-end of pre-16S rRNA. The protein is Putative pre-16S rRNA nuclease of Chlamydia pneumoniae (Chlamydophila pneumoniae).